The chain runs to 859 residues: Glucans biosynthesis glucosyltransferase H (859 aa).

The next 6 helical transmembrane spans lie at 144–166 (YILL…GILP), 200–222 (LLLF…MGFL), 523–545 (VMSY…LLAV), 573–595 (VALF…ILIW), 608–630 (VTVS…MLFH), and 684–706 (SFLW…SVIS).

The protein belongs to the glycosyltransferase 2 family. OpgH subfamily.

It is found in the cell inner membrane. Its pathway is glycan metabolism; osmoregulated periplasmic glucan (OPG) biosynthesis. Its function is as follows. Involved in the biosynthesis of osmoregulated periplasmic glucans (OPGs). This chain is Glucans biosynthesis glucosyltransferase H, found in Pseudomonas syringae pv. tomato (strain ATCC BAA-871 / DC3000).